The sequence spans 545 residues: DNA mismatch repair protein MutL (545 aa).

Residues 517–545 (RRSGARGGGEARPRPQEESFPEAPLPREP) form a disordered region.

The protein belongs to the DNA mismatch repair MutL/HexB family.

In terms of biological role, this protein is involved in the repair of mismatches in DNA. It is required for dam-dependent methyl-directed DNA mismatch repair. May act as a 'molecular matchmaker', a protein that promotes the formation of a stable complex between two or more DNA-binding proteins in an ATP-dependent manner without itself being part of a final effector complex. This chain is DNA mismatch repair protein MutL, found in Thermus thermophilus (strain ATCC 27634 / DSM 579 / HB8).